The sequence spans 118 residues: UPF0102 protein Francci3_3586 (118 aa).

This sequence belongs to the UPF0102 family.

The chain is UPF0102 protein Francci3_3586 from Frankia casuarinae (strain DSM 45818 / CECT 9043 / HFP020203 / CcI3).